The sequence spans 484 residues: Cysteine--tRNA ligase (484 aa).

Residue Cys-29 coordinates Zn(2+). Positions 31 to 41 match the 'HIGH' region motif; sequence PTVQSAPHIGH. Residues Cys-219, His-244, and Glu-248 each coordinate Zn(2+). The short motif at 275–279 is the 'KMSKS' region element; that stretch reads KMSKS. Lys-278 contributes to the ATP binding site.

It belongs to the class-I aminoacyl-tRNA synthetase family. As to quaternary structure, monomer. It depends on Zn(2+) as a cofactor.

It localises to the cytoplasm. The enzyme catalyses tRNA(Cys) + L-cysteine + ATP = L-cysteinyl-tRNA(Cys) + AMP + diphosphate. This is Cysteine--tRNA ligase from Clavibacter sepedonicus (Clavibacter michiganensis subsp. sepedonicus).